A 370-amino-acid chain; its full sequence is Anhydro-N-acetylmuramic acid kinase (370 aa).

12-19 (GTSLDGVD) is a binding site for ATP.

It belongs to the anhydro-N-acetylmuramic acid kinase family.

It catalyses the reaction 1,6-anhydro-N-acetyl-beta-muramate + ATP + H2O = N-acetyl-D-muramate 6-phosphate + ADP + H(+). It functions in the pathway amino-sugar metabolism; 1,6-anhydro-N-acetylmuramate degradation. It participates in cell wall biogenesis; peptidoglycan recycling. Functionally, catalyzes the specific phosphorylation of 1,6-anhydro-N-acetylmuramic acid (anhMurNAc) with the simultaneous cleavage of the 1,6-anhydro ring, generating MurNAc-6-P. Is required for the utilization of anhMurNAc either imported from the medium or derived from its own cell wall murein, and thus plays a role in cell wall recycling. This chain is Anhydro-N-acetylmuramic acid kinase, found in Proteus mirabilis (strain HI4320).